The following is a 457-amino-acid chain: CUB1 family protein C30C2.08 (457 aa).

Coiled coils occupy residues 119 to 174 and 418 to 448; these read TQND…NISK and QELVNSLLTQCHQLIEELRDEKHQHDIEERE.

This sequence belongs to the CUB1 family.

The protein resides in the cytoplasm. It is found in the nucleus. In terms of biological role, involved in bleomycin tolerance with links to DNA repair and/or proteasome function. The polypeptide is CUB1 family protein C30C2.08 (Schizosaccharomyces pombe (strain 972 / ATCC 24843) (Fission yeast)).